The chain runs to 769 residues: Disintegrin and metalloproteinase domain-containing protein 11 (769 aa).

Residues 1-23 form the signal peptide; it reads MRLLRRWAFAALLLSLLPTPGLG. Positions 24–225 are excised as a propeptide; it reads TQGPAGALRW…PNRPRLRRKR (202 aa). Positions 40-78 are disordered; the sequence is GGPGAPEVTEPSRLVRESSGGEVRKQQLDTRVRQEPPGG. Residues 61–73 are compositionally biased toward basic and acidic residues; sequence EVRKQQLDTRVRQ. Asn96 and Asn163 each carry an N-linked (GlcNAc...) asparagine glycan. At 226–734 the chain is on the extracellular side; it reads QVRRGHPTVH…ERYKGPSGTN (509 aa). In terms of domain architecture, Peptidase M12B spans 239 to 438; sequence KYVELIVIND…GGGSCLFNKP (200 aa). The required for localization to cerebellar cortex basket cell terminals. Also required for localization of KCNA1, KCNA2, DLG4 and ADAM22 to cerebellar cortex basket cell terminal perisomatic axons and pinceaux stretch occupies residues 332 to 769; the sequence is GRTFQSTSSG…NIRRGRSGGA (438 aa). 4 disulfides stabilise this stretch: Cys349–Cys433, Cys392–Cys417, Cys394–Cys401, and Cys503–Cys523. The 88-residue stretch at 444–531 folds into the Disintegrin domain; the sequence is PPECGNGFVE…QCPPNLHKLD (88 aa). 2 N-linked (GlcNAc...) asparagine glycosylation sites follow: Asn605 and Asn673. Disulfide bonds link Cys677–Cys692, Cys686–Cys698, and Cys700–Cys709. One can recognise an EGF-like domain in the interval 677-709; that stretch reads CPGSGERRICSHHGVCSNEGKCICQPDWTGKDC. The helical transmembrane segment at 735 to 755 threads the bilayer; that stretch reads IIIGSIAGAVLVAAIVLGGTG. Residues 756–769 are Cytoplasmic-facing; that stretch reads WGFKNIRRGRSGGA.

Interacts with LGI1 and LGI4. Interacts with KCNA1/KV1.1, KCNA2/KV1.2, DLG4/PSD-95 and ADAM22. In terms of processing, the precursor is cleaved by a furin endopeptidase. As to expression, expressed predominantly in brain. Slightly detected or not at all in other tissues.

The protein localises to the presynaptic cell membrane. It is found in the perikaryon. The protein resides in the cell projection. Its subcellular location is the axon. Probable ligand for integrin in the brain. This is a non catalytic metalloprotease-like protein. Required for localization of the potassium channel subunit proteins KCNA1/KV1.1 and KCNA2/KV1.2 at cerebellar cortex basket cell distal terminals, is thereby involved in ephaptic inhibitory synchronization of Purkinje cell firing and response to stress. Plays a role in spatial learning and motor coordination. Involved in the nociceptive pain response to chemical-derived stimulation. In Homo sapiens (Human), this protein is Disintegrin and metalloproteinase domain-containing protein 11 (ADAM11).